A 361-amino-acid chain; its full sequence is Biotin synthase (361 aa).

The region spanning 47-278 (VHGDEVALCG…AAHIFVMGGR (232 aa)) is the Radical SAM core domain. Residues C65, C69, and C72 each coordinate [4Fe-4S] cluster. Residues S110, C143, and C203 each coordinate [2Fe-2S] cluster. Positions 323–361 (TLRPPDTGKPWAFDGHAPSDADWNRKAAEPRPRPLPVVR) are disordered. The segment covering 339–354 (APSDADWNRKAAEPRP) has biased composition (basic and acidic residues).

Belongs to the radical SAM superfamily. Biotin synthase family. Homodimer. [4Fe-4S] cluster is required as a cofactor. The cofactor is [2Fe-2S] cluster.

It carries out the reaction (4R,5S)-dethiobiotin + (sulfur carrier)-SH + 2 reduced [2Fe-2S]-[ferredoxin] + 2 S-adenosyl-L-methionine = (sulfur carrier)-H + biotin + 2 5'-deoxyadenosine + 2 L-methionine + 2 oxidized [2Fe-2S]-[ferredoxin]. It participates in cofactor biosynthesis; biotin biosynthesis; biotin from 7,8-diaminononanoate: step 2/2. In terms of biological role, catalyzes the conversion of dethiobiotin (DTB) to biotin by the insertion of a sulfur atom into dethiobiotin via a radical-based mechanism. This Anaeromyxobacter sp. (strain K) protein is Biotin synthase.